A 94-amino-acid chain; its full sequence is Large ribosomal subunit protein bL25 (94 aa).

The protein belongs to the bacterial ribosomal protein bL25 family. As to quaternary structure, part of the 50S ribosomal subunit; part of the 5S rRNA/L5/L18/L25 subcomplex. Contacts the 5S rRNA. Binds to the 5S rRNA independently of L5 and L18.

Its function is as follows. This is one of the proteins that binds to the 5S RNA in the ribosome where it forms part of the central protuberance. The polypeptide is Large ribosomal subunit protein bL25 (Yersinia pestis bv. Antiqua (strain Antiqua)).